The sequence spans 253 residues: Imidazole glycerol phosphate synthase subunit HisF (253 aa).

Catalysis depends on residues Asp-11 and Asp-130.

This sequence belongs to the HisA/HisF family. In terms of assembly, heterodimer of HisH and HisF.

It localises to the cytoplasm. It catalyses the reaction 5-[(5-phospho-1-deoxy-D-ribulos-1-ylimino)methylamino]-1-(5-phospho-beta-D-ribosyl)imidazole-4-carboxamide + L-glutamine = D-erythro-1-(imidazol-4-yl)glycerol 3-phosphate + 5-amino-1-(5-phospho-beta-D-ribosyl)imidazole-4-carboxamide + L-glutamate + H(+). It functions in the pathway amino-acid biosynthesis; L-histidine biosynthesis; L-histidine from 5-phospho-alpha-D-ribose 1-diphosphate: step 5/9. Functionally, IGPS catalyzes the conversion of PRFAR and glutamine to IGP, AICAR and glutamate. The HisF subunit catalyzes the cyclization activity that produces IGP and AICAR from PRFAR using the ammonia provided by the HisH subunit. This Acidithiobacillus ferrooxidans (strain ATCC 23270 / DSM 14882 / CIP 104768 / NCIMB 8455) (Ferrobacillus ferrooxidans (strain ATCC 23270)) protein is Imidazole glycerol phosphate synthase subunit HisF.